The following is a 265-amino-acid chain: Hemin import ATP-binding protein HmuV (265 aa).

The ABC transporter domain maps to 13–249 (LKASNLHLQL…TAVENVYGWP (237 aa)). 45 to 52 (GPNGAGKS) is a binding site for ATP.

The protein belongs to the ABC transporter superfamily. Heme (hemin) importer (TC 3.A.1.14.5) family. The complex is composed of two ATP-binding proteins (HmuV), two transmembrane proteins (HmuU) and a solute-binding protein (HmuT).

It is found in the cell inner membrane. Part of the ABC transporter complex HmuTUV involved in hemin import. Responsible for energy coupling to the transport system. The chain is Hemin import ATP-binding protein HmuV from Photobacterium damsela subsp. piscicida (Pasteurella piscicida).